The sequence spans 481 residues: Probable glycine dehydrogenase (decarboxylating) subunit 2 (481 aa).

Residues 1–23 (MVIFEKTRGKNSPSVMPSKKGDV) form a disordered region. The residue at position 263 (lysine 263) is an N6-(pyridoxal phosphate)lysine.

The protein belongs to the GcvP family. C-terminal subunit subfamily. In terms of assembly, the glycine cleavage system is composed of four proteins: P, T, L and H. In this organism, the P 'protein' is a heterodimer of two subunits. It depends on pyridoxal 5'-phosphate as a cofactor.

It carries out the reaction N(6)-[(R)-lipoyl]-L-lysyl-[glycine-cleavage complex H protein] + glycine + H(+) = N(6)-[(R)-S(8)-aminomethyldihydrolipoyl]-L-lysyl-[glycine-cleavage complex H protein] + CO2. The glycine cleavage system catalyzes the degradation of glycine. The P protein binds the alpha-amino group of glycine through its pyridoxal phosphate cofactor; CO(2) is released and the remaining methylamine moiety is then transferred to the lipoamide cofactor of the H protein. The protein is Probable glycine dehydrogenase (decarboxylating) subunit 2 of Francisella philomiragia subsp. philomiragia (strain ATCC 25017 / CCUG 19701 / FSC 153 / O#319-036).